Here is a 308-residue protein sequence, read N- to C-terminus: MISVKVPASSANLGAGFDCMGVALKLYNIIEVEEIEKGLEITSSPDDPSIAKDENNLVFKAMKVVFNEVGWYPKGLRINLINEIPLTRGLGSSAACISGGIYAANLLCGGKLSEEEMIFLAAKMEGHPDNSTPAMIGGLVFAVLEENKVNYIKFVVPNRLKFAVFIPDFQLSTEYARNILPKYIEFKDAVFNVGRAALFASAITTGNYDLLPAATQDRLHQPYRKNLIPDFDKIVNLSLEFGAKGAFLSGAGPSIIALIDENYDSFEQNVKLALSSLELKSKWDLMILEADNSGATVFSVQSSSSFKR.

Residue 85-95 coordinates ATP; that stretch reads PLTRGLGSSAA.

It belongs to the GHMP kinase family. Homoserine kinase subfamily.

The protein resides in the cytoplasm. The catalysed reaction is L-homoserine + ATP = O-phospho-L-homoserine + ADP + H(+). Its pathway is amino-acid biosynthesis; L-threonine biosynthesis; L-threonine from L-aspartate: step 4/5. Functionally, catalyzes the ATP-dependent phosphorylation of L-homoserine to L-homoserine phosphate. In Caldicellulosiruptor saccharolyticus (strain ATCC 43494 / DSM 8903 / Tp8T 6331), this protein is Homoserine kinase.